Here is a 369-residue protein sequence, read N- to C-terminus: Uroporphyrinogen decarboxylase (369 aa).

Substrate contacts are provided by residues 28–32, Asp-78, Tyr-154, Ser-209, and His-339; that span reads RQAGR.

Belongs to the uroporphyrinogen decarboxylase family. As to quaternary structure, homodimer.

It localises to the cytoplasm. The catalysed reaction is uroporphyrinogen III + 4 H(+) = coproporphyrinogen III + 4 CO2. It participates in porphyrin-containing compound metabolism; protoporphyrin-IX biosynthesis; coproporphyrinogen-III from 5-aminolevulinate: step 4/4. Functionally, catalyzes the decarboxylation of four acetate groups of uroporphyrinogen-III to yield coproporphyrinogen-III. The polypeptide is Uroporphyrinogen decarboxylase (Polaromonas sp. (strain JS666 / ATCC BAA-500)).